We begin with the raw amino-acid sequence, 142 residues long: Large ribosomal subunit protein uL11 (142 aa).

This sequence belongs to the universal ribosomal protein uL11 family. Part of the ribosomal stalk of the 50S ribosomal subunit. Interacts with L10 and the large rRNA to form the base of the stalk. L10 forms an elongated spine to which L12 dimers bind in a sequential fashion forming a multimeric L10(L12)X complex. One or more lysine residues are methylated.

Functionally, forms part of the ribosomal stalk which helps the ribosome interact with GTP-bound translation factors. The chain is Large ribosomal subunit protein uL11 from Rhizobium meliloti (strain 1021) (Ensifer meliloti).